The following is a 250-amino-acid chain: Peptidyl-tRNA hydrolase (250 aa).

Residue tyrosine 14 coordinates tRNA. Histidine 19 acts as the Proton acceptor in catalysis. TRNA contacts are provided by phenylalanine 64, asparagine 66, and asparagine 112. Residues 192–250 (MGDGNQRPGGVKTDPAQLEKAPPKAQSHIRQARQNQKKPNIPESGPMAEMLKKLLGKKD) form a disordered region. The span at 219–229 (HIRQARQNQKK) shows a compositional bias: polar residues. Over residues 241–250 (MLKKLLGKKD) the composition is skewed to basic and acidic residues.

Belongs to the PTH family. As to quaternary structure, monomer.

The protein localises to the cytoplasm. It catalyses the reaction an N-acyl-L-alpha-aminoacyl-tRNA + H2O = an N-acyl-L-amino acid + a tRNA + H(+). In terms of biological role, hydrolyzes ribosome-free peptidyl-tRNAs (with 1 or more amino acids incorporated), which drop off the ribosome during protein synthesis, or as a result of ribosome stalling. Its function is as follows. Catalyzes the release of premature peptidyl moieties from peptidyl-tRNA molecules trapped in stalled 50S ribosomal subunits, and thus maintains levels of free tRNAs and 50S ribosomes. The chain is Peptidyl-tRNA hydrolase from Brucella canis (strain ATCC 23365 / NCTC 10854 / RM-666).